Reading from the N-terminus, the 52-residue chain is Phospholamban (52 aa).

Met-1 is subject to N-acetylmethionine. Residues 1-31 (MDKVQYLTRSAIRRASTIEMPQQARQNLQNL) are Cytoplasmic-facing. Ser-16 is modified (phosphoserine; by PKA and DMPK). Phosphothreonine; by CaMK2 is present on Thr-17. The helical transmembrane segment at 32–52 (FINFCLILICLLLICIIVMLL) threads the bilayer. Cys-36 is lipidated: S-palmitoyl cysteine.

It belongs to the phospholamban family. Homopentamer. Can also form heterooligomers with other sarcoplasmic/endoplasmic reticulum calcium ATPase (SERCA) regulators ARLN, ERLN, SLN and STRIT1/DWORF. Monomer. Interacts with HAX1. Interacts as a monomer with ATP2A2; the interaction decreases ATP2A2 Ca(2+) affinity. Interacts with VMP1; VMP1 competes with PLN and SLN to prevent them from forming an inhibitory complex with ATP2A2. Interacts with S100A1 in a Ca(2+)-dependent manner. Phosphorylation by DMPK may stimulate sarcoplasmic reticulum calcium uptake in cardiomyocytes. Phosphorylation by PKA abolishes the inhibition of ATP2A2-mediated calcium uptake. Phosphorylated at Thr-17 by CaMK2, and in response to beta-adrenergic stimulation. Post-translationally, palmitoylated by ZDHHC16, promoting formation of the homopentamer. In terms of processing, in elongated spermatids, proteolytically cleaved by SPPL2C which modulates intracellular Ca(2+) homeostasis. In terms of tissue distribution, heart.

The protein resides in the endoplasmic reticulum membrane. It is found in the sarcoplasmic reticulum membrane. The protein localises to the mitochondrion membrane. It localises to the membrane. Its function is as follows. Reversibly inhibits the activity of ATP2A2/SERCA2 in cardiac sarcoplasmic reticulum by decreasing the apparent affinity of the ATPase for Ca(2+). Binds preferentially to the ATP-bound E1 conformational form of ATP2A2 which predominates at low Ca(2+) concentrations during the diastolic phase of the cardiac cycle. Inhibits ATP2A2 Ca(2+) affinity by disrupting its allosteric activation by ATP. Modulates the contractility of the heart muscle in response to physiological stimuli via its effects on ATP2A2. Modulates calcium re-uptake during muscle relaxation and plays an important role in calcium homeostasis in the heart muscle. The degree of ATP2A2 inhibition depends on the oligomeric state of PLN. ATP2A2 inhibition is alleviated by PLN phosphorylation. Also inhibits the activity of ATP2A3/SERCA3. Controls intracellular Ca(2+) levels in elongated spermatids and may play a role in germ cell differentiation. In the thalamic reticular nucleus of the brain, plays a role in the regulation of sleep patterns and executive functioning. This is Phospholamban from Canis lupus familiaris (Dog).